Here is a 320-residue protein sequence, read N- to C-terminus: MAKYDYNPKYGLENYSIFLPFETSFDAFRSTTWMQNHWYQSITASVVYVAVIFTGKKIMEKYKPFQLDTPLFVWNSFLAIFSILGFLRMTPEFVWSWSAEGNSFKYSICHSSYAQGVTGFWTEQFAMSKLFELIDTIFIVLRKRPLIFLHWYHHVTVMIYTWHAYKDHTASGRWFIWMNYGVHALMYSYYALRSLKFRLPKQMAMVVTTLQLAQMVMGVIIGVTVYRIKSSGEYCQQTWDNLGLCFGVYFTYFLLFANFFYHAYVKKNNRYTEVKKDKKEKEEPVDFEILEPKEDINANIAEPSITTRSAAARRKVQKAD.

N-linked (GlcNAc...) asparagine glycosylation occurs at asparagine 14. 6 helical membrane-spanning segments follow: residues 33 to 53 (WMQN…AVIF), 67 to 87 (LDTP…LGFL), 120 to 140 (FWTE…IFIV), 145 to 165 (PLIF…WHAY), 203 to 223 (MAMV…IIGV), and 242 to 262 (LGLC…FFYH).

It belongs to the ELO family.

It is found in the membrane. It catalyses the reaction a very-long-chain acyl-CoA + malonyl-CoA + H(+) = a very-long-chain 3-oxoacyl-CoA + CO2 + CoA. It functions in the pathway lipid metabolism; fatty acid biosynthesis. Its function is as follows. Could be implicated in synthesis of very long chain fatty acids. May be required for normally rapid growth. The chain is Putative fatty acid elongase 3 (elo-3) from Caenorhabditis elegans.